Here is a 151-residue protein sequence, read N- to C-terminus: Phosphoribosyl-AMP cyclohydrolase (151 aa).

Mg(2+) is bound at residue Asp-94. Cys-95 contacts Zn(2+). Mg(2+) is bound by residues Asp-96 and Asp-98. Residues Cys-112 and Cys-119 each coordinate Zn(2+).

It belongs to the PRA-CH family. Homodimer. The cofactor is Mg(2+). Zn(2+) serves as cofactor.

It is found in the cytoplasm. The catalysed reaction is 1-(5-phospho-beta-D-ribosyl)-5'-AMP + H2O = 1-(5-phospho-beta-D-ribosyl)-5-[(5-phospho-beta-D-ribosylamino)methylideneamino]imidazole-4-carboxamide. The protein operates within amino-acid biosynthesis; L-histidine biosynthesis; L-histidine from 5-phospho-alpha-D-ribose 1-diphosphate: step 3/9. Its function is as follows. Catalyzes the hydrolysis of the adenine ring of phosphoribosyl-AMP. The protein is Phosphoribosyl-AMP cyclohydrolase of Rhodopseudomonas palustris (strain ATCC BAA-98 / CGA009).